A 201-amino-acid chain; its full sequence is Recombination protein RecR (201 aa).

A C4-type zinc finger spans residues 60–75 (CSVCGNIDTTDPCSIC). A Toprim domain is found at 83 to 178 (GTIIVVEDIS…KITRLAHGVP (96 aa)).

It belongs to the RecR family.

May play a role in DNA repair. It seems to be involved in an RecBC-independent recombinational process of DNA repair. It may act with RecF and RecO. The sequence is that of Recombination protein RecR from Bartonella bacilliformis (strain ATCC 35685 / KC583 / Herrer 020/F12,63).